A 111-amino-acid polypeptide reads, in one-letter code: Large ribosomal subunit protein uL24 (111 aa).

This sequence belongs to the universal ribosomal protein uL24 family. In terms of assembly, part of the 50S ribosomal subunit.

One of two assembly initiator proteins, it binds directly to the 5'-end of the 23S rRNA, where it nucleates assembly of the 50S subunit. In terms of biological role, one of the proteins that surrounds the polypeptide exit tunnel on the outside of the subunit. The polypeptide is Large ribosomal subunit protein uL24 (Heliobacterium modesticaldum (strain ATCC 51547 / Ice1)).